Reading from the N-terminus, the 463-residue chain is MSKKSTFIILAAGEGKRMKSKYSKVVQKIMGKPMILYIIDEIEKNFEDGRIVVVVGNKKEDVYKVLEGRNVRFAYQEKQLGTAHAVMCAMSEISDDSEDVFVLYGDVPFIKADTLKKLSQKRKEEAAALCLLTAIFENPYGYGRIIADENGNVLKIVEERDATEEQRKIKKINPGFYCFEKQELVNVLSKIDNKNSQNEYYLTDAIEILNRSGKKVVKVTVEDNFEVMGINSRYELFVAEQELKLRINKEHLSKGVQIIDIYSTYIHPDAQIGKDTVIYPGTFILGKTSIGEDCVIGPQSYIVDSKIGNNCHILFSVIENSEIKDNVKIGPYAHLRPNSLLEEGVKIGNFVEIKNSKLGKNTKSAHLTYIGDADIGENVNLGCGTIFVNYDGYKKHRTVVENNAFIGCNSNLIAPVKIGENAYVAAGSTITEDVPANALAIARERQTNKEGWVLRRKQMYENR.

The segment at 1 to 233 is pyrophosphorylase; the sequence is MSKKSTFIIL…NFEVMGINSR (233 aa). UDP-N-acetyl-alpha-D-glucosamine is bound by residues 10–13, Lys-24, Gln-76, 81–82, 104–106, Gly-143, Glu-158, Asn-173, and Asn-231; these read LAAG, GT, and YGD. Asp-106 contributes to the Mg(2+) binding site. Asn-231 serves as a coordination point for Mg(2+). A linker region spans residues 234 to 254; sequence YELFVAEQELKLRINKEHLSK. Residues 255–463 form an N-acetyltransferase region; that stretch reads GVQIIDIYST…LRRKQMYENR (209 aa). UDP-N-acetyl-alpha-D-glucosamine is bound by residues Arg-336 and Lys-354. His-366 acts as the Proton acceptor in catalysis. Tyr-369 and Asn-380 together coordinate UDP-N-acetyl-alpha-D-glucosamine. Residues 389 to 390, Ala-426, and Arg-443 each bind acetyl-CoA; that span reads NY.

In the N-terminal section; belongs to the N-acetylglucosamine-1-phosphate uridyltransferase family. The protein in the C-terminal section; belongs to the transferase hexapeptide repeat family. In terms of assembly, homotrimer. Requires Mg(2+) as cofactor.

The protein localises to the cytoplasm. The catalysed reaction is alpha-D-glucosamine 1-phosphate + acetyl-CoA = N-acetyl-alpha-D-glucosamine 1-phosphate + CoA + H(+). The enzyme catalyses N-acetyl-alpha-D-glucosamine 1-phosphate + UTP + H(+) = UDP-N-acetyl-alpha-D-glucosamine + diphosphate. It participates in nucleotide-sugar biosynthesis; UDP-N-acetyl-alpha-D-glucosamine biosynthesis; N-acetyl-alpha-D-glucosamine 1-phosphate from alpha-D-glucosamine 6-phosphate (route II): step 2/2. It functions in the pathway nucleotide-sugar biosynthesis; UDP-N-acetyl-alpha-D-glucosamine biosynthesis; UDP-N-acetyl-alpha-D-glucosamine from N-acetyl-alpha-D-glucosamine 1-phosphate: step 1/1. The protein operates within bacterial outer membrane biogenesis; LPS lipid A biosynthesis. Its function is as follows. Catalyzes the last two sequential reactions in the de novo biosynthetic pathway for UDP-N-acetylglucosamine (UDP-GlcNAc). The C-terminal domain catalyzes the transfer of acetyl group from acetyl coenzyme A to glucosamine-1-phosphate (GlcN-1-P) to produce N-acetylglucosamine-1-phosphate (GlcNAc-1-P), which is converted into UDP-GlcNAc by the transfer of uridine 5-monophosphate (from uridine 5-triphosphate), a reaction catalyzed by the N-terminal domain. The sequence is that of Bifunctional protein GlmU from Caldicellulosiruptor saccharolyticus (strain ATCC 43494 / DSM 8903 / Tp8T 6331).